The chain runs to 302 residues: MVRTEGDSWDIVTSVGYTALAVAAGRALDAKLDPPLAHDDHAAAFVAAAGAPQLAAAVATADMTSSAAFNAQWVGVRTRFFDNFFADAAGAGVRQHVILAAGLDSRAYRLPWPAITTVFELDQPKVLQFKDEVLKRSGAQPSARRVTVAVDLRDDWPAALREAGFDATQPTGWILEGLLPYLPGAAQDALFERLNDMSAPGSRVAAELGPEPGELERLAASIKTVVGETSDGETQPNLRDLWFDDPRLDTKTWLGERGWTVTEANLVDAAVAYGRPLRDLPPAFENFLSTKFFTAVQDHPRG.

S-adenosyl-L-methionine-binding positions include Asp-122 and 151-152 (DL).

This sequence belongs to the UPF0677 family.

Functionally, exhibits S-adenosyl-L-methionine-dependent methyltransferase activity. The sequence is that of Putative S-adenosyl-L-methionine-dependent methyltransferase MAB_4586c from Mycobacteroides abscessus (strain ATCC 19977 / DSM 44196 / CCUG 20993 / CIP 104536 / JCM 13569 / NCTC 13031 / TMC 1543 / L948) (Mycobacterium abscessus).